Consider the following 253-residue polypeptide: Tryptophan synthase alpha chain (253 aa).

Residues E47 and D58 each act as proton acceptor in the active site.

This sequence belongs to the TrpA family. Tetramer of two alpha and two beta chains.

The catalysed reaction is (1S,2R)-1-C-(indol-3-yl)glycerol 3-phosphate + L-serine = D-glyceraldehyde 3-phosphate + L-tryptophan + H2O. The protein operates within amino-acid biosynthesis; L-tryptophan biosynthesis; L-tryptophan from chorismate: step 5/5. Functionally, the alpha subunit is responsible for the aldol cleavage of indoleglycerol phosphate to indole and glyceraldehyde 3-phosphate. This is Tryptophan synthase alpha chain from Syntrophotalea carbinolica (strain DSM 2380 / NBRC 103641 / GraBd1) (Pelobacter carbinolicus).